Consider the following 311-residue polypeptide: Deacetoxycephalosporin C synthase (311 aa).

One can recognise a Fe2OG dioxygenase domain in the interval 154–267 (DCEPLLRFRY…RTSSVFFLRP (114 aa)).

This sequence belongs to the iron/ascorbate-dependent oxidoreductase family. The cofactor is Fe cation. It depends on L-ascorbate as a cofactor.

The catalysed reaction is penicillin N + 2-oxoglutarate + O2 = deacetoxycephalosporin C + succinate + CO2 + H2O. It functions in the pathway antibiotic biosynthesis; cephalosporin C biosynthesis. Functionally, catalyzes the step from penicillin N to deacetoxy-cephalosporin C. The sequence is that of Deacetoxycephalosporin C synthase (cefE) from Streptomyces clavuligerus.